A 171-amino-acid chain; its full sequence is Nicotinamide-nucleotide adenylyltransferase (171 aa).

It belongs to the archaeal NMN adenylyltransferase family.

The protein localises to the cytoplasm. It carries out the reaction beta-nicotinamide D-ribonucleotide + ATP + H(+) = diphosphate + NAD(+). Its pathway is cofactor biosynthesis; NAD(+) biosynthesis; NAD(+) from nicotinamide D-ribonucleotide: step 1/1. The protein is Nicotinamide-nucleotide adenylyltransferase of Methanococcus maripaludis (strain DSM 14266 / JCM 13030 / NBRC 101832 / S2 / LL).